Reading from the N-terminus, the 268-residue chain is 4-hydroxy-tetrahydrodipicolinate reductase (268 aa).

NAD(+) contacts are provided by residues 8–13 (GAAGRM) and Asp35. Arg36 is an NADP(+) binding site. NAD(+)-binding positions include 99–101 (GTT) and 123–126 (AANF). His156 (proton donor/acceptor) is an active-site residue. Residue His157 coordinates (S)-2,3,4,5-tetrahydrodipicolinate. Residue Lys160 is the Proton donor of the active site. Residue 166 to 167 (GT) participates in (S)-2,3,4,5-tetrahydrodipicolinate binding.

The protein belongs to the DapB family.

It is found in the cytoplasm. The enzyme catalyses (S)-2,3,4,5-tetrahydrodipicolinate + NAD(+) + H2O = (2S,4S)-4-hydroxy-2,3,4,5-tetrahydrodipicolinate + NADH + H(+). The catalysed reaction is (S)-2,3,4,5-tetrahydrodipicolinate + NADP(+) + H2O = (2S,4S)-4-hydroxy-2,3,4,5-tetrahydrodipicolinate + NADPH + H(+). It participates in amino-acid biosynthesis; L-lysine biosynthesis via DAP pathway; (S)-tetrahydrodipicolinate from L-aspartate: step 4/4. Catalyzes the conversion of 4-hydroxy-tetrahydrodipicolinate (HTPA) to tetrahydrodipicolinate. The protein is 4-hydroxy-tetrahydrodipicolinate reductase of Pseudomonas aeruginosa (strain LESB58).